Reading from the N-terminus, the 154-residue chain is S-ribosylhomocysteine lyase (154 aa).

His-58, His-62, and Cys-125 together coordinate Fe cation.

The protein belongs to the LuxS family. Homodimer. Fe cation serves as cofactor.

The catalysed reaction is S-(5-deoxy-D-ribos-5-yl)-L-homocysteine = (S)-4,5-dihydroxypentane-2,3-dione + L-homocysteine. Functionally, involved in the synthesis of autoinducer 2 (AI-2) which is secreted by bacteria and is used to communicate both the cell density and the metabolic potential of the environment. The regulation of gene expression in response to changes in cell density is called quorum sensing. Catalyzes the transformation of S-ribosylhomocysteine (RHC) to homocysteine (HC) and 4,5-dihydroxy-2,3-pentadione (DPD). The protein is S-ribosylhomocysteine lyase of Dichelobacter nodosus (strain VCS1703A).